Consider the following 605-residue polypeptide: Protein spinster (605 aa).

Positions methionine 1–proline 94 are disordered. Residues serine 27–glutamate 38 show a composition bias toward low complexity. Positions threonine 55–threonine 67 are enriched in polar residues. Positions arginine 76–histidine 85 are enriched in basic residues. The helical transmembrane segment at phenylalanine 115–valine 137 threads the bilayer. Residue asparagine 149 is glycosylated (N-linked (GlcNAc...) asparagine). 5 helical membrane passes run glycine 153–leucine 173, proline 180–methionine 200, phenylalanine 203–isoleucine 223, methionine 240–serine 260, and tryptophan 271–lysine 291. Asparagine 319 carries N-linked (GlcNAc...) asparagine glycosylation. Helical transmembrane passes span phenylalanine 329–leucine 349, phenylalanine 367–leucine 387, valine 401–valine 421, leucine 431–leucine 451, and phenylalanine 465–isoleucine 485. N-linked (GlcNAc...) asparagine glycosylation occurs at asparagine 519. Residues serine 558–isoleucine 578 traverse the membrane as a helical segment. Residue asparagine 583 is glycosylated (N-linked (GlcNAc...) asparagine).

The protein belongs to the major facilitator superfamily. Spinster (TC 2.A.1.49) family. Enriched in brain (at protein level).

The protein localises to the late endosome membrane. Its subcellular location is the lysosome membrane. Its function is as follows. Probable sphingolipid transporter that plays a central role in endosomes and/or lysosomes storage. Involved in TGF-beta-mediated synaptic growth regulation both pre- and postsynaptically via its function in endosomal storage regulation. Also required during oogenesis by regulating yolk spheres storage. The polypeptide is Protein spinster (spin) (Drosophila melanogaster (Fruit fly)).